A 133-amino-acid chain; its full sequence is Helix-loop-helix protein 1 (133 aa).

The segment at 1–79 is disordered; sequence MMLNSDTMEL…RRATAKYRTA (79 aa). The segment covering 25–45 has biased composition (gly residues); it reads DCGGGAGPDGAGPGGPGGGQA. Residues 52–65 are compositionally biased toward basic and acidic residues; sequence EPGRKDLQHLSREE. The segment covering 66-79 has biased composition (basic residues); sequence RRRRRRATAKYRTA. The bHLH domain maps to 75–127; that stretch reads KYRTAHATRERIRVEAFNLAFAELRKLLPTLPPDKKLSKIEILRLAICYISYL.

In terms of assembly, efficient DNA binding requires dimerization with another bHLH protein.

Its subcellular location is the nucleus. May serve as DNA-binding protein and may be involved in the control of cell-type determination, possibly within the developing nervous system. In Homo sapiens (Human), this protein is Helix-loop-helix protein 1 (NHLH1).